The sequence spans 306 residues: MRILYLGTPEIAVAPLELLHASGHEIVGVVTQPDRPAGRKNVLTAPPVKLAAERLGIPVFQPETLKDPAAVARLRAFEPEVGVVAAYGEILRKQVLAIPALGYLNIHPSILPLYRGPAPVTGAILAGDDLVGVSIIKLTAKMDAGPILGQMVMPLANDARAGEWTAQLMRQGGELLAQVLPAYAAGQIQAQIQDDSQASYTQMISKNDGLINWNLPALVIERMTRAYDPWPGTAVKLNDQPFKILRAKAHTSWSGTIQPGTLFEQQGQILVATGSGALELLEVQPAGKRPMAANDWRRGAKDIEQL.

Position 109-112 (109-112 (SILP)) interacts with (6S)-5,6,7,8-tetrahydrofolate.

It belongs to the Fmt family.

The catalysed reaction is L-methionyl-tRNA(fMet) + (6R)-10-formyltetrahydrofolate = N-formyl-L-methionyl-tRNA(fMet) + (6S)-5,6,7,8-tetrahydrofolate + H(+). Its function is as follows. Attaches a formyl group to the free amino group of methionyl-tRNA(fMet). The formyl group appears to play a dual role in the initiator identity of N-formylmethionyl-tRNA by promoting its recognition by IF2 and preventing the misappropriation of this tRNA by the elongation apparatus. In Herpetosiphon aurantiacus (strain ATCC 23779 / DSM 785 / 114-95), this protein is Methionyl-tRNA formyltransferase.